We begin with the raw amino-acid sequence, 843 residues long: Elongation factor 2 (843 aa).

Positions 17–253 constitute a tr-type G domain; it reads HNIRNMSVIA…LWGENFFDPA (237 aa). 26–33 is a binding site for GTP; that stretch reads AHVDHGKS. Thr57 and Thr59 each carry phosphothreonine. Residue 158–161 coordinates GTP; the sequence is NKMD. His700 carries the diphthamide modification.

It belongs to the TRAFAC class translation factor GTPase superfamily. Classic translation factor GTPase family. EF-G/EF-2 subfamily. In terms of processing, phosphorylation by EF-2 kinase completely inactivates EF-2.

It is found in the cytoplasm. The catalysed reaction is GTP + H2O = GDP + phosphate + H(+). Catalyzes the GTP-dependent ribosomal translocation step during translation elongation. During this step, the ribosome changes from the pre-translocational (PRE) to the post-translocational (POST) state as the newly formed A-site-bound peptidyl-tRNA and P-site-bound deacylated tRNA move to the P and E sites, respectively. Catalyzes the coordinated movement of the two tRNA molecules, the mRNA and conformational changes in the ribosome. This chain is Elongation factor 2, found in Beta vulgaris (Sugar beet).